The following is a 519-amino-acid chain: Probable cytosol aminopeptidase (519 aa).

Mn(2+) is bound by residues Lys-283 and Asp-288. Lys-295 is a catalytic residue. Residues Asp-306, Asp-365, and Glu-367 each coordinate Mn(2+). Arg-369 is an active-site residue.

The protein belongs to the peptidase M17 family. The cofactor is Mn(2+).

Its subcellular location is the cytoplasm. It carries out the reaction Release of an N-terminal amino acid, Xaa-|-Yaa-, in which Xaa is preferably Leu, but may be other amino acids including Pro although not Arg or Lys, and Yaa may be Pro. Amino acid amides and methyl esters are also readily hydrolyzed, but rates on arylamides are exceedingly low.. The catalysed reaction is Release of an N-terminal amino acid, preferentially leucine, but not glutamic or aspartic acids.. Presumably involved in the processing and regular turnover of intracellular proteins. Catalyzes the removal of unsubstituted N-terminal amino acids from various peptides. The polypeptide is Probable cytosol aminopeptidase (Mycobacterium marinum (strain ATCC BAA-535 / M)).